A 503-amino-acid polypeptide reads, in one-letter code: Probable cytosol aminopeptidase (503 aa).

Mn(2+) is bound by residues K270 and D275. Residue K282 is part of the active site. Positions 293, 352, and 354 each coordinate Mn(2+). Residue R356 is part of the active site.

The protein belongs to the peptidase M17 family. It depends on Mn(2+) as a cofactor.

It is found in the cytoplasm. It catalyses the reaction Release of an N-terminal amino acid, Xaa-|-Yaa-, in which Xaa is preferably Leu, but may be other amino acids including Pro although not Arg or Lys, and Yaa may be Pro. Amino acid amides and methyl esters are also readily hydrolyzed, but rates on arylamides are exceedingly low.. The enzyme catalyses Release of an N-terminal amino acid, preferentially leucine, but not glutamic or aspartic acids.. Functionally, presumably involved in the processing and regular turnover of intracellular proteins. Catalyzes the removal of unsubstituted N-terminal amino acids from various peptides. The sequence is that of Probable cytosol aminopeptidase from Escherichia coli O139:H28 (strain E24377A / ETEC).